Consider the following 182-residue polypeptide: N-alpha-acetyltransferase daf-31 (182 aa).

The N-acetyltransferase domain occupies 1–152; the sequence is MNIRCARVDD…DAYAMRRDLA (152 aa). The segment at 162 to 182 is disordered; the sequence is PADREAYTTAKTTDDKKKNRS.

It belongs to the acetyltransferase family. ARD1 subfamily. Component of the N-terminal acetyltransferase A (NatA) complex. Expressed in head and tail hypodermal cells, hypodermal seam cells, pharynx, intestine and head and tail neurons.

It carries out the reaction N-terminal glycyl-[protein] + acetyl-CoA = N-terminal N(alpha)-acetylglycyl-[protein] + CoA + H(+). It catalyses the reaction N-terminal L-alanyl-[protein] + acetyl-CoA = N-terminal N(alpha)-acetyl-L-alanyl-[protein] + CoA + H(+). The catalysed reaction is N-terminal L-seryl-[protein] + acetyl-CoA = N-terminal N(alpha)-acetyl-L-seryl-[protein] + CoA + H(+). The enzyme catalyses N-terminal L-valyl-[protein] + acetyl-CoA = N-terminal N(alpha)-acetyl-L-valyl-[protein] + CoA + H(+). It carries out the reaction N-terminal L-cysteinyl-[protein] + acetyl-CoA = N-terminal N(alpha)-acetyl-L-cysteinyl-[protein] + CoA + H(+). It catalyses the reaction N-terminal L-threonyl-[protein] + acetyl-CoA = N-terminal N(alpha)-acetyl-L-threonyl-[protein] + CoA + H(+). In terms of biological role, catalytic subunit of the N-terminal acetyltransferase A (NatA) complex which displays alpha (N-terminal) acetyltransferase activity. Plays a role in regulating larval development, metabolism and longevity. Functions downstream or alongside daf-3, daf-12 and daf-16 in the dauer formation pathway. Functions upstream of daf-15 to enable animal development. This Caenorhabditis elegans protein is N-alpha-acetyltransferase daf-31.